An 83-amino-acid polypeptide reads, in one-letter code: Sec-independent protein translocase protein TatA (83 aa).

The chain crosses the membrane as a helical span at residues 1-21; that stretch reads MGNMGIWQLLIIAVIVILLFG. Basic and acidic residues-rich tracts occupy residues 47 to 57 and 71 to 83; these read EEKKALEETAS and AEKKTETKDKEQV. Residues 47 to 83 are disordered; that stretch reads EEKKALEETASEKATPSVEKTAPNAEKKTETKDKEQV.

It belongs to the TatA/E family. As to quaternary structure, the Tat system comprises two distinct complexes: a TatABC complex, containing multiple copies of TatA, TatB and TatC subunits, and a separate TatA complex, containing only TatA subunits. Substrates initially bind to the TatABC complex, which probably triggers association of the separate TatA complex to form the active translocon.

It is found in the cell inner membrane. Functionally, part of the twin-arginine translocation (Tat) system that transports large folded proteins containing a characteristic twin-arginine motif in their signal peptide across membranes. TatA could form the protein-conducting channel of the Tat system. The sequence is that of Sec-independent protein translocase protein TatA from Shewanella woodyi (strain ATCC 51908 / MS32).